The primary structure comprises 386 residues: D(1)-like dopamine receptor (386 aa).

Residues 1 to 10 (MEIFTTTRGT) show a composition bias toward polar residues. The disordered stretch occupies residues 1–28 (MEIFTTTRGTSAGPEPAPGGHGGTDSPR). Residues 1 to 35 (MEIFTTTRGTSAGPEPAPGGHGGTDSPRTSDLSLR) lie on the Extracellular side of the membrane. Residues 36–56 (ALTGCVLCILIVSTLLGNALV) traverse the membrane as a helical segment. The Cytoplasmic segment spans residues 57 to 72 (CAAVIKFRHLRSKVTN). A helical membrane pass occupies residues 73-92 (AFVISLAVSDLFVAVLVMPW). The Extracellular segment spans residues 93–109 (RAVSEVAGVWLFGAFCD). An intrachain disulfide couples C108 to C188. Residues 110–131 (TWVAFDIMCSTASILHLCIISM) traverse the membrane as a helical segment. The Cytoplasmic segment spans residues 132-150 (DRYWAISSPFRYERRMTPR). Residues 151–175 (FGCVMIGVAWTLSVLISFIPVQLNW) form a helical membrane-spanning segment. The Extracellular portion of the chain corresponds to 176-195 (HARGRERTDPGDCNASLNRT). Residues N189 and N193 are each glycosylated (N-linked (GlcNAc...) asparagine). Residues 196 to 220 (YAISSSLISFYIPVLIMVGTYTRIF) traverse the membrane as a helical segment. Residues 221 to 266 (RIGRTQIRRISSLERAAPRATRGPALCDEESSLKTSFRRETKVLKT) are Cytoplasmic-facing. A helical membrane pass occupies residues 267–292 (LSVIMGVFVFCWLPFFVLNCMVPFCR). Residues 293–305 (LEPAAAPCVSDTT) are Extracellular-facing. A helical transmembrane segment spans residues 306–325 (FSVFVWFGWANSSLNPVIYA). Residues 326–386 (FNADFRKAFS…SRGGPYQFAL (61 aa)) are Cytoplasmic-facing.

This sequence belongs to the G-protein coupled receptor 1 family.

It localises to the cell membrane. It is found in the cell projection. Its subcellular location is the cilium membrane. This is one of the five types (D1 to D5) of receptors for dopamine. The activity of this receptor is mediated by G proteins which activate adenylyl cyclase. The polypeptide is D(1)-like dopamine receptor (Oreochromis mossambicus (Mozambique tilapia)).